A 386-amino-acid chain; its full sequence is Ribonucleoside-diphosphate reductase subunit M2 (386 aa).

Serine 20 carries the post-translational modification Phosphoserine. A Phosphothreonine modification is found at threonine 33. The short motif at 49-51 (RRI) is the Cy element. 3 residues coordinate Fe cation: aspartate 139, glutamate 170, and histidine 173. The active site involves tyrosine 177. Fe cation-binding residues include glutamate 233, glutamate 267, and histidine 270.

Belongs to the ribonucleoside diphosphate reductase small chain family. As to quaternary structure, heterodimer of a large and a small subunit. Interacts (via Cy motif and when phosphorylated at Thr-33) with CCNF; the interaction occurs exclusively in G2 and early M. Fe cation serves as cofactor. Post-translationally, phosphorylation on Ser-20 relieves the inhibitory effect on Wnt signaling. Phosphorylated on Thr-33 by CDK1 and CDK2; predominantly in G2 and M phase. Ubiquitinated by the SCF(CCNF) E3 ubiquitin-protein ligase complex; leading to its degradation by the proteasome.

The protein resides in the cytoplasm. Its subcellular location is the nucleus. The catalysed reaction is a 2'-deoxyribonucleoside 5'-diphosphate + [thioredoxin]-disulfide + H2O = a ribonucleoside 5'-diphosphate + [thioredoxin]-dithiol. Functionally, provides the precursors necessary for DNA synthesis. Catalyzes the biosynthesis of deoxyribonucleotides from the corresponding ribonucleotides. Inhibits Wnt signaling. This chain is Ribonucleoside-diphosphate reductase subunit M2 (RRM2), found in Mesocricetus auratus (Golden hamster).